A 101-amino-acid polypeptide reads, in one-letter code: Protein S100-A4 (101 aa).

Ala-2 carries the post-translational modification N-acetylalanine. Residue Lys-7 is modified to N6-acetyllysine. EF-hand domains follow at residues 12 to 47 and 50 to 85; these read MVSTFHKYSGKEGDKFKLNKSELKELLTRELPSFLG and TDEAAFQKLMSNLDSNRDNEVDFQEYCVFLSCIAMM. Ca(2+) is bound by residues Lys-28 and Glu-33. Lys-35 is modified (N6-acetyllysine). Asp-63, Asn-65, Asp-67, Glu-69, and Glu-74 together coordinate Ca(2+).

The protein belongs to the S-100 family. As to quaternary structure, homodimer. Interacts with PPFIBP1 in a calcium-dependent mode. Interacts with PGLYRP1; this complex acts as a chemoattractant that promotes lymphocyte movement. Interacts with MYH9; this interaction increases cell motility. Interacts with Annexin 2/ANXA2. Interacts with TP53; this interaction promotes TP53 degradation. Interacts with CCR5. Interacts with FCGR3A; this interaction inhibits PKC-dependent phosphorylation of FCGR3A. Ubiquitously expressed.

The protein localises to the secreted. It localises to the nucleus. It is found in the cytoplasm. Functionally, calcium-binding protein that plays a role in various cellular processes including motility, angiogenesis, cell differentiation, apoptosis, and autophagy. Increases cell motility and invasiveness by interacting with non-muscle myosin heavy chain (NMMHC) IIA/MYH9. Mechanistically, promotes filament depolymerization and increases the amount of soluble myosin-IIA, resulting in the formation of stable protrusions facilitating chemotaxis. Also modulates the pro-apoptotic function of TP53 by binding to its C-terminal transactivation domain within the nucleus and reducing its protein levels. Within the extracellular space, stimulates cytokine production including granulocyte colony-stimulating factor and CCL24 from T-lymphocytes. In addition, stimulates T-lymphocyte chemotaxis by acting as a chemoattractant complex with PGLYRP1 that promotes lymphocyte migration via CCR5 and CXCR3 receptors. The protein is Protein S100-A4 (S100A4) of Homo sapiens (Human).